Reading from the N-terminus, the 159-residue chain is Transcription elongation factor GreA (159 aa).

The protein belongs to the GreA/GreB family.

Necessary for efficient RNA polymerase transcription elongation past template-encoded arresting sites. The arresting sites in DNA have the property of trapping a certain fraction of elongating RNA polymerases that pass through, resulting in locked ternary complexes. Cleavage of the nascent transcript by cleavage factors such as GreA or GreB allows the resumption of elongation from the new 3'terminus. GreA releases sequences of 2 to 3 nucleotides. The protein is Transcription elongation factor GreA of Mycoplasmoides gallisepticum (strain R(low / passage 15 / clone 2)) (Mycoplasma gallisepticum).